A 546-amino-acid chain; its full sequence is Immunoglobulin-like domain-containing receptor 1 (546 aa).

A signal peptide spans 1–23 (MAWPKLPAPWLLLCTWLPAGCLS). Residues 24-162 (LLVTVQHTER…TSGDPDKEVK (139 aa)) form the Ig-like V-type domain. Residues 24-167 (LLVTVQHTER…DKEVKLIVLH (144 aa)) lie on the Extracellular side of the membrane. Cysteine 45 and cysteine 145 are oxidised to a cystine. A helical transmembrane segment spans residues 168-188 (WLTVIFIILGALLLLLLIGVC). Topologically, residues 189 to 546 (WCQCCPQYCC…SSHSGRSVVI (358 aa)) are cytoplasmic. The segment at 399-546 (WSGRHRSSRL…SSHSGRSVVI (148 aa)) is disordered. A compositionally biased stretch (basic and acidic residues) spans 442–457 (RCQERPRRPSPRESTQ). Residues 458-467 (RHGRRRRHRS) are compositionally biased toward basic residues. A phosphoserine mark is found at serine 499 and serine 501. The segment covering 527–539 (GSVERRSEKDSSH) has biased composition (basic and acidic residues).

The protein belongs to the immunoglobulin superfamily. LISCH7 family. As to quaternary structure, homooligomer. Interacts with MARVELD2 and OCLN; the interaction is required to recruit MARVELD2 to tricellular contacts. Interacts (via C-terminus) with TRA2A, TRA2B and SRSF1. Interacts with PLSCR1. In terms of tissue distribution, mainly expressed in prostate and to a lower extent in testis, pancreas, kidney, heart and liver.

The protein localises to the cell membrane. It localises to the cell junction. It is found in the tight junction. The protein resides in the cytoplasm. Its subcellular location is the cytosol. Functionally, maintains epithelial barrier function by recruiting MARVELD2/tricellulin to tricellular tight junctions (tTJs). Crucial for normal hearing by maintaining the structural and functional integrity of tTJs, which are critical for the survival of auditory neurosensory HCs. Mediates fatty acids and lipoproteins-stimulated CCK/cholecystokinin secretion in the small intestine. In the inner ear, may regulate alternative pre-mRNA splicing via binding to TRA2A, TRA2B and SRSF1. Its function is as follows. (Microbial infection) Promotes influenza virus infection by inhibiting viral nucleoprotein NP binding to PLSCR1 and thereby PLSCR1-mediated antiviral activity. This Homo sapiens (Human) protein is Immunoglobulin-like domain-containing receptor 1.